A 224-amino-acid chain; its full sequence is Small ribosomal subunit protein uS13 (224 aa).

The span at 1–17 (MSEKTDKTEKKQKKAEE) shows a compositional bias: basic and acidic residues. 2 disordered regions span residues 1-64 (MSEK…AEEK) and 184-224 (HERG…EDKK). Low complexity-rich tracts occupy residues 20-30 (ETASAEAAPAK) and 38-47 (AKPAEGAPAD). Over residues 210-224 (KKGEQGGAAKKEDKK) the composition is skewed to basic and acidic residues.

Belongs to the universal ribosomal protein uS13 family. In terms of assembly, part of the 30S ribosomal subunit. Forms a loose heterodimer with protein S19. Forms two bridges to the 50S subunit in the 70S ribosome.

Its function is as follows. Located at the top of the head of the 30S subunit, it contacts several helices of the 16S rRNA. In the 70S ribosome it contacts the 23S rRNA (bridge B1a) and protein L5 of the 50S subunit (bridge B1b), connecting the 2 subunits; these bridges are implicated in subunit movement. The polypeptide is Small ribosomal subunit protein uS13 (Methanocella arvoryzae (strain DSM 22066 / NBRC 105507 / MRE50)).